Consider the following 157-residue polypeptide: 2-C-methyl-D-erythritol 2,4-cyclodiphosphate synthase (157 aa).

2 residues coordinate a divalent metal cation: Asp-8 and His-10. 4-CDP-2-C-methyl-D-erythritol 2-phosphate-binding positions include 8–10 (DVH) and 34–35 (HS). Residue His-42 coordinates a divalent metal cation. 4-CDP-2-C-methyl-D-erythritol 2-phosphate contacts are provided by residues 56–58 (DIG), 61–65 (FPDTD), 100–106 (AQAPKMA), 132–135 (TTTE), Phe-139, and Arg-142.

The protein belongs to the IspF family. In terms of assembly, homotrimer. A divalent metal cation is required as a cofactor.

It carries out the reaction 4-CDP-2-C-methyl-D-erythritol 2-phosphate = 2-C-methyl-D-erythritol 2,4-cyclic diphosphate + CMP. It functions in the pathway isoprenoid biosynthesis; isopentenyl diphosphate biosynthesis via DXP pathway; isopentenyl diphosphate from 1-deoxy-D-xylulose 5-phosphate: step 4/6. In terms of biological role, involved in the biosynthesis of isopentenyl diphosphate (IPP) and dimethylallyl diphosphate (DMAPP), two major building blocks of isoprenoid compounds. Catalyzes the conversion of 4-diphosphocytidyl-2-C-methyl-D-erythritol 2-phosphate (CDP-ME2P) to 2-C-methyl-D-erythritol 2,4-cyclodiphosphate (ME-CPP) with a corresponding release of cytidine 5-monophosphate (CMP). The protein is 2-C-methyl-D-erythritol 2,4-cyclodiphosphate synthase of Pseudomonas syringae pv. syringae (strain B728a).